A 555-amino-acid polypeptide reads, in one-letter code: Glucose-6-phosphate isomerase (555 aa).

D-glucose 6-phosphate contacts are provided by residues 169–170, 219–224, Gln364, Glu368, His399, and Lys521; these read GS and SKTFTT. The active-site Proton donor is the Glu368. Catalysis depends on residues His399 and Lys521.

It belongs to the GPI family. In terms of assembly, homodimer.

Its subcellular location is the cytoplasm. The protein localises to the cytosol. The catalysed reaction is alpha-D-glucose 6-phosphate = beta-D-fructose 6-phosphate. Its pathway is carbohydrate degradation; glycolysis; D-glyceraldehyde 3-phosphate and glycerone phosphate from D-glucose: step 2/4. Functionally, in the cytoplasm, catalyzes the conversion of glucose-6-phosphate to fructose-6-phosphate, the second step in glycolysis, and the reverse reaction during gluconeogenesis. This is Glucose-6-phosphate isomerase (PGI1) from Candida glabrata (strain ATCC 2001 / BCRC 20586 / JCM 3761 / NBRC 0622 / NRRL Y-65 / CBS 138) (Yeast).